Reading from the N-terminus, the 84-residue chain is Large ribosomal subunit protein bL27 (84 aa).

Positions 1–22 (MAHKKGGGSTKNGRDSNPKYLG) are disordered.

The protein belongs to the bacterial ribosomal protein bL27 family.

This chain is Large ribosomal subunit protein bL27, found in Prosthecochloris aestuarii (strain DSM 271 / SK 413).